Consider the following 175-residue polypeptide: Peptide methionine sulfoxide reductase MsrA (175 aa).

The active site involves Cys10.

This sequence belongs to the MsrA Met sulfoxide reductase family.

The enzyme catalyses L-methionyl-[protein] + [thioredoxin]-disulfide + H2O = L-methionyl-(S)-S-oxide-[protein] + [thioredoxin]-dithiol. It catalyses the reaction [thioredoxin]-disulfide + L-methionine + H2O = L-methionine (S)-S-oxide + [thioredoxin]-dithiol. Its function is as follows. Has an important function as a repair enzyme for proteins that have been inactivated by oxidation. Catalyzes the reversible oxidation-reduction of methionine sulfoxide in proteins to methionine. In Psychrobacter sp. (strain PRwf-1), this protein is Peptide methionine sulfoxide reductase MsrA.